We begin with the raw amino-acid sequence, 60 residues long: Large ribosomal subunit protein bL32 (60 aa).

Belongs to the bacterial ribosomal protein bL32 family.

This Pseudothermotoga lettingae (strain ATCC BAA-301 / DSM 14385 / NBRC 107922 / TMO) (Thermotoga lettingae) protein is Large ribosomal subunit protein bL32.